A 1003-amino-acid polypeptide reads, in one-letter code: UPF0182 protein Mkms_1433 (1003 aa).

The next 7 membrane-spanning stretches (helical) occupy residues 18 to 38 (VLIG…RFID), 63 to 83 (VVVF…GLAL), 114 to 134 (LFGF…AQSY), 176 to 196 (FVAT…FGGI), 211 to 231 (IQLV…YWLD), 260 to 280 (KLIL…AIVL), and 288 to 308 (IGVV…PLVV). Positions 902–937 (ATGPAPANLPDGQPAAQPPNGQQPAAQTPGNQAGRA) are enriched in low complexity. The interval 902–979 (ATGPAPANLP…MSGLQDAQRS (78 aa)) is disordered.

It belongs to the UPF0182 family.

Its subcellular location is the cell membrane. In Mycobacterium sp. (strain KMS), this protein is UPF0182 protein Mkms_1433.